Consider the following 131-residue polypeptide: Probable ATP synthase subunit g 1, mitochondrial (131 aa).

It belongs to the ATPase g subunit family. As to quaternary structure, subunit of the F-type ATPase which has 2 components, CF(1) - the catalytic core - and CF(0) - the membrane proton channel.

It is found in the mitochondrion membrane. Mitochondrial membrane ATP synthase (F(1)F(0) ATP synthase or Complex V) produces ATP from ADP in the presence of a proton gradient across the membrane which is generated by electron transport complexes of the respiratory chain. F-type ATPases consist of two structural domains, F(1) - containing the extramembraneous catalytic core, and F(0) - containing the membrane proton channel, linked together by a central stalk and a peripheral stalk. During catalysis, ATP synthesis in the catalytic domain of F(1) is coupled via a rotary mechanism of the central stalk subunits to proton translocation. Part of the complex F(0) domain. Minor subunit located with subunit a in the membrane. This is Probable ATP synthase subunit g 1, mitochondrial from Caenorhabditis elegans.